We begin with the raw amino-acid sequence, 33 residues long: Photosystem II reaction center protein Psb30 (33 aa).

Residues 5–25 (VLAQLTVLTLIVISGPLVIAL) form a helical membrane-spanning segment.

Belongs to the Psb30/Ycf12 family. As to quaternary structure, PSII is composed of 1 copy each of membrane proteins PsbA, PsbB, PsbC, PsbD, PsbE, PsbF, PsbH, PsbI, PsbJ, PsbK, PsbL, PsbM, PsbT, PsbX, PsbY, PsbZ, Psb30/Ycf12, peripheral proteins of the oxygen-evolving complex and a large number of cofactors. It forms dimeric complexes.

It is found in the plastid. The protein resides in the chloroplast thylakoid membrane. Functionally, a core subunit of photosystem II (PSII), probably helps stabilize the reaction center. The chain is Photosystem II reaction center protein Psb30 from Cycas taitungensis (Prince sago).